A 105-amino-acid polypeptide reads, in one-letter code: Phosphoribosyl-AMP cyclohydrolase (105 aa).

Asp72 contributes to the Mg(2+) binding site. A Zn(2+)-binding site is contributed by Cys73. Asp74 and Asp76 together coordinate Mg(2+). Zn(2+)-binding residues include Cys89 and Cys96.

Belongs to the PRA-CH family. As to quaternary structure, homodimer. Mg(2+) serves as cofactor. Requires Zn(2+) as cofactor.

It localises to the cytoplasm. It carries out the reaction 1-(5-phospho-beta-D-ribosyl)-5'-AMP + H2O = 1-(5-phospho-beta-D-ribosyl)-5-[(5-phospho-beta-D-ribosylamino)methylideneamino]imidazole-4-carboxamide. It participates in amino-acid biosynthesis; L-histidine biosynthesis; L-histidine from 5-phospho-alpha-D-ribose 1-diphosphate: step 3/9. Its function is as follows. Catalyzes the hydrolysis of the adenine ring of phosphoribosyl-AMP. The chain is Phosphoribosyl-AMP cyclohydrolase from Listeria monocytogenes serotype 4b (strain CLIP80459).